The sequence spans 262 residues: Probable carboxylesterase Culp3 (262 aa).

The N-terminal stretch at 1 to 41 is a signal peptide; it reads MNNRPIRLLTSGRAGLGAGALITAVVLLIALGAVWTPVAFA. Cysteines 44 and 114 form a disulfide. Serine 125 (nucleophile) is an active-site residue. Cysteine 188 and cysteine 195 form a disulfide bridge. Aspartate 192 is an active-site residue. The active-site Proton donor/acceptor is histidine 206. Positions 241 to 262 are disordered; the sequence is LPGSVLQMPGTAAPAPESLHGR.

Belongs to the cutinase family.

Its subcellular location is the secreted. Functionally, shows weak esterase activity with the p-nitrophenol-linked aliphatic ester pNP-butyrate. Does not exhibit cutinase activity. This Mycobacterium tuberculosis (strain ATCC 25618 / H37Rv) protein is Probable carboxylesterase Culp3 (cut3).